The sequence spans 211 residues: Thymidine kinase (211 aa).

ATP-binding positions include 9-16 (STMNAGKS) and 87-90 (DEAQ). The Proton acceptor role is filled by Glu88. Zn(2+)-binding residues include Cys145, Cys147, Cys182, and His185.

This sequence belongs to the thymidine kinase family. As to quaternary structure, homotetramer.

The protein localises to the cytoplasm. It catalyses the reaction thymidine + ATP = dTMP + ADP + H(+). The chain is Thymidine kinase from Rhodopirellula baltica (strain DSM 10527 / NCIMB 13988 / SH1).